A 165-amino-acid polypeptide reads, in one-letter code: UPF0763 protein NIS_0363 (165 aa).

Belongs to the UPF0763 family.

This is UPF0763 protein NIS_0363 from Nitratiruptor sp. (strain SB155-2).